A 337-amino-acid chain; its full sequence is Ribose-phosphate pyrophosphokinase 4 (337 aa).

An N-acetylserine modification is found at Ser-2. Mg(2+) contacts are provided by Asp-158 and His-160. A binding of phosphoribosylpyrophosphate region spans residues 241 to 256 (GCHVVIVDDLVQSGGT).

This sequence belongs to the ribose-phosphate pyrophosphokinase family.

It catalyses the reaction D-ribose 5-phosphate + ATP = 5-phospho-alpha-D-ribose 1-diphosphate + AMP + H(+). The protein is Ribose-phosphate pyrophosphokinase 4 (PRS4) of Arabidopsis thaliana (Mouse-ear cress).